The primary structure comprises 464 residues: Hepatocyte nuclear factor 4-alpha (464 aa).

Residues asparagine 57–asparagine 132 constitute a DNA-binding region (nuclear receptor). 2 NR C4-type zinc fingers span residues cysteine 60–cysteine 80 and cysteine 96–cysteine 120. Residues serine 147 to glycine 376 form the NR LBD domain. The short motif at asparagine 367–glycine 375 is the 9aaTAD element. Over residues serine 410–glutamate 421 the composition is skewed to polar residues. Positions serine 410–alanine 433 are disordered.

Belongs to the nuclear hormone receptor family. NR2 subfamily. In terms of assembly, homodimerization is required for HNF4-alpha to bind to its recognition site. Expressed in liver and kidney.

Its subcellular location is the nucleus. Its function is as follows. Transcriptional regulator; binds and activates the promoter for the HNF1-alpha gene. Potential initiator of a transcriptional cascade within a subset of cells committed to a specific developmental program. Could be a determinant for asymmetry in early development. May play a role in the regulation of the circadian clock. The sequence is that of Hepatocyte nuclear factor 4-alpha (hnf4a) from Xenopus laevis (African clawed frog).